Here is a 149-residue protein sequence, read N- to C-terminus: Large ribosomal subunit protein uL13 (149 aa).

This sequence belongs to the universal ribosomal protein uL13 family. In terms of assembly, part of the 50S ribosomal subunit.

This protein is one of the early assembly proteins of the 50S ribosomal subunit, although it is not seen to bind rRNA by itself. It is important during the early stages of 50S assembly. The chain is Large ribosomal subunit protein uL13 from Cyanothece sp. (strain PCC 7425 / ATCC 29141).